The chain runs to 151 residues: Prefoldin subunit alpha (151 aa).

Residues 120–151 (TVEEETASLEEKAQQAQQQQMQQLQQMQQEDE) form a disordered region. Residues 133 to 151 (QQAQQQQMQQLQQMQQEDE) show a composition bias toward low complexity.

Belongs to the prefoldin subunit alpha family. Heterohexamer of two alpha and four beta subunits.

It localises to the cytoplasm. In terms of biological role, molecular chaperone capable of stabilizing a range of proteins. Seems to fulfill an ATP-independent, HSP70-like function in archaeal de novo protein folding. The chain is Prefoldin subunit alpha from Natronomonas pharaonis (strain ATCC 35678 / DSM 2160 / CIP 103997 / JCM 8858 / NBRC 14720 / NCIMB 2260 / Gabara) (Halobacterium pharaonis).